Here is a 1027-residue protein sequence, read N- to C-terminus: Pro-apoptotic serine protease nma111 (1027 aa).

Residues 1–46 are disordered; that stretch reads MDLNGDAGAKRKRSSIVPAERPAKHLKPESSALTPGDSTPANGTVY. Residues 31–42 are compositionally biased toward polar residues; the sequence is SALTPGDSTPAN. The interval 81-265 is serine protease; the sequence is VVSIHFCQTC…AATDYFLPLD (185 aa). Active-site charge relay system residues include histidine 119, aspartate 150, and serine 232. PDZ domains lie at 288 to 373 and 875 to 956; these read QWIL…LLVQ and VFCG…VTFD. Positions 991–1027 are disordered; that stretch reads HNKSKHKDGIAPDAANLNPDAMEQGYDGASDIEPEAE.

It belongs to the peptidase S1C family.

It localises to the nucleus. Its function is as follows. Nuclear serine protease which mediates apoptosis. In Aspergillus oryzae (strain ATCC 42149 / RIB 40) (Yellow koji mold), this protein is Pro-apoptotic serine protease nma111 (nma111).